The following is a 247-amino-acid chain: O-methyltransferase imqG (247 aa).

S-adenosyl-L-methionine-binding positions include glutamate 84, 86–87 (GT), and alanine 138. Residues aspartate 163, aspartate 189, and asparagine 190 each contribute to the a divalent metal cation site. Substrate is bound at residue aspartate 163.

It belongs to the class I-like SAM-binding methyltransferase superfamily. Cation-dependent O-methyltransferase family. CCoAMT subfamily. In terms of assembly, homodimer. A divalent metal cation serves as cofactor.

The protein operates within secondary metabolite biosynthesis. Its function is as follows. O-methyltransferase; part of the gene cluster that mediates the biosynthesis of imizoquins A to D, tripeptide-derived alkaloids that serve a protective role against oxidative stress that are essential for normal germination. ImqB is a canonical three-module NRPS that assembles the tripeptide backbone of the imizoquins via condensation of Trp, Tyr, and Leu-derived precursors. N-methylation by imqF and phenol oxidation by imqC, followed by cyclization via the FAD-dependent oxidase imqH carry out the three-step transformation of L-tyrosine into tetrahydroisoquinoline. Importantly, this sequence requires the presence of a free amine in the tyrosine moiety, indicating that isoquinoline formation occurs prior to peptide bond formation. The imidazolidin-4-one ring of imizoquins could form following additional oxidation of the methyl-derived bridgehead carbon by imqH. Lastly, O-methylation by imqG and leucine hydroxylation by imqE complete biosynthesis of the imizoquins. The polypeptide is O-methyltransferase imqG (Aspergillus flavus (strain ATCC 200026 / FGSC A1120 / IAM 13836 / NRRL 3357 / JCM 12722 / SRRC 167)).